The sequence spans 61 residues: Metallothionein-1 (61 aa).

Met1 bears the N-acetylmethionine mark. The interval 1–29 (MDPNCSCPTGGSCTCAGSCKCKACRCPSC) is beta. A divalent metal cation is bound by residues Cys5, Cys7, Cys13, Cys15, Cys19, Cys21, Cys24, Cys26, Cys29, Cys33, Cys34, Cys36, Cys37, Cys41, Cys44, Cys48, Cys50, Cys57, Cys59, and Cys60. The interval 30–61 (KKSCCSCCPVGCAKCAQGCVCKGASDKCSCCA) is alpha.

Belongs to the metallothionein superfamily. Type 1 family. Monomer.

In terms of biological role, metallothioneins have a high content of cysteine residues that bind various heavy metals; these proteins are transcriptionally regulated by both heavy metals and glucocorticoids. The protein is Metallothionein-1 (MT1) of Bos taurus (Bovine).